A 924-amino-acid polypeptide reads, in one-letter code: Periplasmic nitrate reductase (924 aa).

Positions 1–29 form a signal peptide, tat-type signal; sequence MNRRDFIKNTAIASACGVAGLSVPSSVLA. The 4Fe-4S Mo/W bis-MGD-type domain occupies 35–91; that stretch reads WRWDKAVCRFCGTGCGILVARQDGKIVAVKGDPAAPVNRGLNCIKGYFNAKIMYGED. Residues cysteine 42, cysteine 45, cysteine 49, and cysteine 77 each coordinate [4Fe-4S] cluster. Mo-bis(molybdopterin guanine dinucleotide) is bound by residues lysine 79, glutamine 147, asparagine 172, cysteine 176, 209-216, methionine 417, glutamine 421, asparagine 527, 552-553, lysine 575, aspartate 602, and 814-823; these read WGANMAEM, SD, and TGRVLEHWHS. Tryptophan 890 serves as a coordination point for substrate. Positions 898 and 915 each coordinate Mo-bis(molybdopterin guanine dinucleotide).

Belongs to the prokaryotic molybdopterin-containing oxidoreductase family. NasA/NapA/NarB subfamily. Component of the periplasmic nitrate reductase NapAB complex composed of NapA and NapB. [4Fe-4S] cluster is required as a cofactor. It depends on Mo-bis(molybdopterin guanine dinucleotide) as a cofactor. In terms of processing, predicted to be exported by the Tat system. The position of the signal peptide cleavage has not been experimentally proven.

The protein resides in the periplasm. It carries out the reaction 2 Fe(II)-[cytochrome] + nitrate + 2 H(+) = 2 Fe(III)-[cytochrome] + nitrite + H2O. In terms of biological role, catalytic subunit of the periplasmic nitrate reductase complex NapAB. Receives electrons from NapB and catalyzes the reduction of nitrate to nitrite. The polypeptide is Periplasmic nitrate reductase (Campylobacter lari (strain RM2100 / D67 / ATCC BAA-1060)).